Here is a 274-residue protein sequence, read N- to C-terminus: Enoyl-CoA isomerase/hydratase fer4 (274 aa).

Substrate is bound by residues 77-81 (AGADL) and G124. Residues 79–109 (ADLKERREMSEAEVIEFLQDLRHMLEQVEKL) adopt a coiled-coil conformation.

The protein belongs to the enoyl-CoA hydratase/isomerase family.

The enzyme catalyses a (3S)-3-hydroxyacyl-CoA = a (2E)-enoyl-CoA + H2O. It catalyses the reaction a 4-saturated-(3S)-3-hydroxyacyl-CoA = a (3E)-enoyl-CoA + H2O. It participates in siderophore biosynthesis. In terms of biological role, enoyl-CoA isomerase/hydratase; part of the gene cluster that mediates the biosynthesis of siderophore ferrichrome A which is contributing to organismal virulence. The first step of ferrichrome A biosynthesis is performed by the HMG-CoA synthase hcs1 which catalyzes the generation of HMG-CoA and CoA using acetoacetyl-CoA and acetyl-CoA as substrates. The enoyl-CoA isomerase/hydratase fer4 then catalyzes the conversion of hcs1-produced HMG-CoA to methylglutaconyl-CoA. The acyltransferase fer5 then fuses the fer4-generated methylglutaconyl-CoA with sid1-generated hydroxyornithine to yield methylglutaconyl hydroxyornithine. Methylglutaconyl hydroxyornithine is then available for use by the NRPS fer3 to generate ferrichrome A. In Mycosarcoma maydis (Corn smut fungus), this protein is Enoyl-CoA isomerase/hydratase fer4.